The sequence spans 343 residues: SH2 domain-containing adapter protein D (343 aa).

Positions 1-176 (MAKWLRDYLN…PADEYDQPWE (176 aa)) are disordered. Composition is skewed to basic and acidic residues over residues 29-40 (DILRAYREQKDL) and 73-82 (IKVEAADMAR). Over residues 92–102 (EEPEAETEYSD) the composition is skewed to acidic residues. Residues 160–176 (RPLEDERPADEYDQPWE) are compositionally biased toward basic and acidic residues. The SH2 domain maps to 225–320 (WFHGPLSRAE…AEHLALLYPV (96 aa)). The segment at 322–343 (SSQSSQGPCTLAAKPERGQGDP) is disordered.

Tyrosine phosphorylated by ABL. Specifically expressed in brain.

Its function is as follows. May function as an adapter protein. This is SH2 domain-containing adapter protein D (Shd) from Mus musculus (Mouse).